The following is a 121-amino-acid chain: Large ribosomal subunit protein bL12 (121 aa).

It belongs to the bacterial ribosomal protein bL12 family. As to quaternary structure, homodimer. Part of the ribosomal stalk of the 50S ribosomal subunit. Forms a multimeric L10(L12)X complex, where L10 forms an elongated spine to which 2 to 4 L12 dimers bind in a sequential fashion. Binds GTP-bound translation factors.

Functionally, forms part of the ribosomal stalk which helps the ribosome interact with GTP-bound translation factors. Is thus essential for accurate translation. In Halalkalibacterium halodurans (strain ATCC BAA-125 / DSM 18197 / FERM 7344 / JCM 9153 / C-125) (Bacillus halodurans), this protein is Large ribosomal subunit protein bL12.